Here is a 346-residue protein sequence, read N- to C-terminus: NADH-quinone oxidoreductase subunit H 2 (346 aa).

Transmembrane regions (helical) follow at residues 14–34 (IAMV…VAYA), 83–103 (FAFL…FAVI), 136–156 (VGVL…VLAG), 172–192 (SAQM…VFML), 208–228 (GAWY…CSIA), 260–280 (FFMA…TLFL), 289–309 (LPGW…CMWI), and 324–344 (LGWK…GIIV).

This sequence belongs to the complex I subunit 1 family. As to quaternary structure, NDH-1 is composed of 14 different subunits. Subunits NuoA, H, J, K, L, M, N constitute the membrane sector of the complex.

It is found in the cell inner membrane. It catalyses the reaction a quinone + NADH + 5 H(+)(in) = a quinol + NAD(+) + 4 H(+)(out). In terms of biological role, NDH-1 shuttles electrons from NADH, via FMN and iron-sulfur (Fe-S) centers, to quinones in the respiratory chain. The immediate electron acceptor for the enzyme in this species is believed to be ubiquinone. Couples the redox reaction to proton translocation (for every two electrons transferred, four hydrogen ions are translocated across the cytoplasmic membrane), and thus conserves the redox energy in a proton gradient. This subunit may bind ubiquinone. In Geobacter metallireducens (strain ATCC 53774 / DSM 7210 / GS-15), this protein is NADH-quinone oxidoreductase subunit H 2.